The following is a 454-amino-acid chain: Mitochondrial distribution and morphology protein 10 (454 aa).

Belongs to the MDM10 family. In terms of assembly, component of the ER-mitochondria encounter structure (ERMES) or MDM complex, composed of MMM1, MDM10, MDM12 and MDM34. Associates with the mitochondrial outer membrane sorting assembly machinery SAM(core) complex.

The protein localises to the mitochondrion outer membrane. Component of the ERMES/MDM complex, which serves as a molecular tether to connect the endoplasmic reticulum and mitochondria. Components of this complex are involved in the control of mitochondrial shape and protein biogenesis and may function in phospholipid exchange. MDM10 is involved in the late assembly steps of the general translocase of the mitochondrial outer membrane (TOM complex). Functions in the TOM40-specific route of the assembly of outer membrane beta-barrel proteins, including the association of TOM40 with the receptor TOM22 and small TOM proteins. Can associate with the SAM(core) complex as well as the MDM12-MMM1 complex, both involved in late steps of the major beta-barrel assembly pathway, that is responsible for biogenesis of all outer membrane beta-barrel proteins. May act as a switch that shuttles between both complexes and channels precursor proteins into the TOM40-specific pathway. Plays a role in mitochondrial morphology and in the inheritance of mitochondria. The protein is Mitochondrial distribution and morphology protein 10 of Candida tropicalis (strain ATCC MYA-3404 / T1) (Yeast).